A 330-amino-acid chain; its full sequence is Ferrochelatase (330 aa).

Fe cation contacts are provided by histidine 200 and glutamate 281.

This sequence belongs to the ferrochelatase family.

Its subcellular location is the cytoplasm. The enzyme catalyses heme b + 2 H(+) = protoporphyrin IX + Fe(2+). It functions in the pathway porphyrin-containing compound metabolism; protoheme biosynthesis; protoheme from protoporphyrin-IX: step 1/1. Catalyzes the ferrous insertion into protoporphyrin IX. The polypeptide is Ferrochelatase (Marinomonas sp. (strain MWYL1)).